Here is a 293-residue protein sequence, read N- to C-terminus: tRNA-cytidine(32) 2-sulfurtransferase (293 aa).

The short motif at serine 62–serine 67 is the PP-loop motif element. Positions 137, 140, and 228 each coordinate [4Fe-4S] cluster.

This sequence belongs to the TtcA family. Homodimer. It depends on Mg(2+) as a cofactor. The cofactor is [4Fe-4S] cluster.

It is found in the cytoplasm. The enzyme catalyses cytidine(32) in tRNA + S-sulfanyl-L-cysteinyl-[cysteine desulfurase] + AH2 + ATP = 2-thiocytidine(32) in tRNA + L-cysteinyl-[cysteine desulfurase] + A + AMP + diphosphate + H(+). The protein operates within tRNA modification. Catalyzes the ATP-dependent 2-thiolation of cytidine in position 32 of tRNA, to form 2-thiocytidine (s(2)C32). The sulfur atoms are provided by the cysteine/cysteine desulfurase (IscS) system. This is tRNA-cytidine(32) 2-sulfurtransferase from Brucella suis (strain ATCC 23445 / NCTC 10510).